The primary structure comprises 269 residues: Ribosomal RNA small subunit methyltransferase A (269 aa).

Positions 18, 20, 45, 66, 91, and 112 each coordinate S-adenosyl-L-methionine.

The protein belongs to the class I-like SAM-binding methyltransferase superfamily. rRNA adenine N(6)-methyltransferase family. RsmA subfamily.

It localises to the cytoplasm. The catalysed reaction is adenosine(1518)/adenosine(1519) in 16S rRNA + 4 S-adenosyl-L-methionine = N(6)-dimethyladenosine(1518)/N(6)-dimethyladenosine(1519) in 16S rRNA + 4 S-adenosyl-L-homocysteine + 4 H(+). Specifically dimethylates two adjacent adenosines (A1518 and A1519) in the loop of a conserved hairpin near the 3'-end of 16S rRNA in the 30S particle. May play a critical role in biogenesis of 30S subunits. The polypeptide is Ribosomal RNA small subunit methyltransferase A (Vibrio parahaemolyticus serotype O3:K6 (strain RIMD 2210633)).